The chain runs to 118 residues: Na(+)/H(+) antiporter subunit G1 (118 aa).

A run of 3 helical transmembrane segments spans residues 9-29, 41-61, and 70-90; these read IALI…IGIL, AGKA…LFFI, and QLIV…HLII.

Belongs to the CPA3 antiporters (TC 2.A.63) subunit G family. As to quaternary structure, may form a heterooligomeric complex that consists of seven subunits: mnhA1, mnhB1, mnhC1, mnhD1, mnhE1, mnhF1 and mnhG1.

The protein resides in the cell membrane. In terms of biological role, mnh complex is a Na(+)/H(+) antiporter involved in Na(+) excretion. In Staphylococcus saprophyticus subsp. saprophyticus (strain ATCC 15305 / DSM 20229 / NCIMB 8711 / NCTC 7292 / S-41), this protein is Na(+)/H(+) antiporter subunit G1 (mnhG1).